The sequence spans 216 residues: Large ribosomal subunit protein uL3 (216 aa).

N5-methylglutamine is present on Gln-157.

This sequence belongs to the universal ribosomal protein uL3 family. In terms of assembly, part of the 50S ribosomal subunit. Forms a cluster with proteins L14 and L19. Post-translationally, methylated by PrmB.

In terms of biological role, one of the primary rRNA binding proteins, it binds directly near the 3'-end of the 23S rRNA, where it nucleates assembly of the 50S subunit. In Stenotrophomonas maltophilia (strain R551-3), this protein is Large ribosomal subunit protein uL3.